A 151-amino-acid polypeptide reads, in one-letter code: MHAKTKKLGTDTSYKRPQVTAQEQLSPEQIAEKLEGYMQINNISEVPLDTHIRYFSIQNDGTKLFRLGGFLRNKINADKYVVLSNGKNSWTVQVKNSVFFKKMNHEEEIESIHQHYKQQLQEKDKIIFKLKNKLQLLSNQTIPLGSKNKKI.

Positions 1–24 are disordered; sequence MHAKTKKLGTDTSYKRPQVTAQEQ.

This is an uncharacterized protein from Acanthamoeba polyphaga mimivirus (APMV).